Here is a 389-residue protein sequence, read N- to C-terminus: 23S rRNA (uracil(747)-C(5))-methyltransferase RlmC (389 aa).

Residues Cys-12, Cys-20, Cys-23, and Cys-99 each contribute to the [4Fe-4S] cluster site. Residues Gln-224, Phe-253, Glu-274, and Asn-321 each contribute to the S-adenosyl-L-methionine site. Cys-348 acts as the Nucleophile in catalysis.

It belongs to the class I-like SAM-binding methyltransferase superfamily. RNA M5U methyltransferase family. RlmC subfamily.

It catalyses the reaction uridine(747) in 23S rRNA + S-adenosyl-L-methionine = 5-methyluridine(747) in 23S rRNA + S-adenosyl-L-homocysteine + H(+). In terms of biological role, catalyzes the formation of 5-methyl-uridine at position 747 (m5U747) in 23S rRNA. This chain is 23S rRNA (uracil(747)-C(5))-methyltransferase RlmC, found in Shewanella sp. (strain W3-18-1).